We begin with the raw amino-acid sequence, 1091 residues long: Rho GTPase-activating protein 7 (1091 aa).

The SAM domain occupies L11–E78. Phosphoserine is present on residues S86, S89, and S320. The focal adhesion-targeting (FAT) stretch occupies residues Q273–G447. Disordered stretches follow at residues V292 to S327, P382 to L439, and S491 to A553. Low complexity-rich tracts occupy residues V297 to T323 and S386 to N400. The segment covering L414 to E425 has biased composition (basic and acidic residues). Polar residues predominate over residues A499–K511. A compositionally biased stretch (basic and acidic residues) spans I513–T523. The span at D526 to N535 shows a compositional bias: polar residues. Residues K614–R636 form a polybasic cluster (PBR) region. The Rho-GAP domain occupies V641–F847. The 208-residue stretch at R877–E1084 folds into the START domain.

As to quaternary structure, interacts with EF1A1, facilitates EF1A1 distribution to the membrane periphery and ruffles upon growth factor stimulation and suppresses cell migration. Interacts with tensin TNS1 (via N-terminus); the interaction is decreased by phosphorylation of TNS1. Interacts with TNS3 and PTEN; in resting cells, interacts with TNS3 (via C2 tensin-type domain) but, following growth factor stimulation, TNS3 and PTEN are phosphorylated which leads to weakened interaction with TNS3 and enhanced interaction with PTEN. Interacts (via C-terminus) with tensin TNS4 (via SH2 domain); the interaction is independent of tyrosine phosphorylation of DLC1.

The protein localises to the cytoplasm. The protein resides in the cell junction. It is found in the focal adhesion. It localises to the membrane. Functions as a GTPase-activating protein for the small GTPases RHOA, RHOB, RHOC and CDC42, terminating their downstream signaling. This induces morphological changes and detachment through cytoskeletal reorganization, playing a critical role in biological processes such as cell migration and proliferation. Also functions in vivo as an activator of the phospholipase PLCD1. Active DLC1 increases cell migration velocity but reduces directionality. Required for growth factor-induced epithelial cell migration; in resting cells, interacts with TNS3 while PTEN interacts with the p85 regulatory subunit of the PI3K kinase complex but growth factor stimulation induces phosphorylation of TNS3 and PTEN, causing them to change their binding preference so that PTEN interacts with DLC1 and TNS3 interacts with p85. The PTEN-DLC1 complex translocates to the posterior of migrating cells to activate RHOA while the TNS3-p85 complex translocates to the leading edge of migrating cells to promote RAC1 activation. The polypeptide is Rho GTPase-activating protein 7 (DLC1) (Canis lupus familiaris (Dog)).